We begin with the raw amino-acid sequence, 223 residues long: uncharacterized protein (223 aa).

This is an uncharacterized protein from Acanthamoeba polyphaga (Amoeba).